The following is a 350-amino-acid chain: Fe(2+) transport protein 2 (350 aa).

A signal peptide spans 1-21; the sequence is MATTKLVYILLILFTFTVSPA. Residues 22–47 lie on the Extracellular side of the membrane; that stretch reads ISTAPEHCDSGFDNPCINKAKALPLK. Residues 48–68 traverse the membrane as a helical segment; sequence IVAIVAILTTSLIGVTSPLFS. Residues 69 to 80 lie on the Cytoplasmic side of the membrane; that stretch reads RYISFLRPDGNG. The chain crosses the membrane as a helical span at residues 81 to 101; that stretch reads FMIVKCFSSGIILGTGFMHVL. Residues 102–120 lie on the Extracellular side of the membrane; that stretch reads PDSFEMLSSKCLSDNPWHK. A helical transmembrane segment spans residues 121–141; that stretch reads FPFAGFVAMMSGLVTLAIDSI. At 142 to 195 the chain is on the cytoplasmic side; it reads TTSLYTGKNSVGPVPDEEYGIDQEKAIHMVGHNHSHGHGVVLATKDDGQLLRYQ. A helical membrane pass occupies residues 196–216; sequence VIAMVLEVGILFHSVVIGLSL. Over 217–227 the chain is Extracellular; that stretch reads GATNDSCTIKG. A helical transmembrane segment spans residues 228–248; the sequence is LIIALCFHHLFEGIGLGGCIL. Over 249–257 the chain is Cytoplasmic; the sequence is QADFTNVKK. A helical membrane pass occupies residues 258-278; that stretch reads FLMAFFFTGTTPCGIFLGIAL. The Extracellular segment spans residues 279-289; that stretch reads SSIYRDNSPTA. Residues 290 to 310 traverse the membrane as a helical segment; that stretch reads LITIGLLNACSAGMLIYMALV. Over 311–329 the chain is Cytoplasmic; sequence DLLATEFMGSMLQGSIKLQ. Residues 330 to 350 traverse the membrane as a helical segment; the sequence is IKCFTAALLGCAVMSVVAVWA.

It belongs to the ZIP transporter (TC 2.A.5) family. In terms of tissue distribution, expressed in the external cell layers of the root subapical zone.

It is found in the cell membrane. In terms of biological role, high-affinity iron transporter that mediates under iron-deficiency the iron uptake from the rhizosphere across the plasma membrane in the root epidermal layer. Could also be capable of transporting zinc ions. In Arabidopsis thaliana (Mouse-ear cress), this protein is Fe(2+) transport protein 2 (IRT2).